The following is a 249-amino-acid chain: MTYDVLSAIASPIIVALDYTNISKALAFVDLISPLYCRLKIGKIMFTRFGPELIIKLQQRGFDIFLDLKYHDIPNTVAGAVSAAADLGVWMISLHAIGGEKMMAAACNALSNFGLGVPKLIAVTVLTSLSDEDLQIIGIPSTASDFAIRLAILAKNCGLDGVVCSAQEAEHIKNICGHHFTIVTPGIRLATDELGDQCRIMTVHQAQQAGVNYMVIGRPITQATKPNCRLVEILNSLKITANSVALSSN.

Substrate-binding positions include aspartate 18, lysine 40, 67–76, threonine 127, arginine 188, glutamine 197, glycine 217, and arginine 218; that span reads DLKYHDIPNT. The active-site Proton donor is lysine 69.

It belongs to the OMP decarboxylase family. Type 1 subfamily. Homodimer.

It catalyses the reaction orotidine 5'-phosphate + H(+) = UMP + CO2. Its pathway is pyrimidine metabolism; UMP biosynthesis via de novo pathway; UMP from orotate: step 2/2. In terms of biological role, catalyzes the decarboxylation of orotidine 5'-monophosphate (OMP) to uridine 5'-monophosphate (UMP). The protein is Orotidine 5'-phosphate decarboxylase of Baumannia cicadellinicola subsp. Homalodisca coagulata.